The sequence spans 199 residues: Melanocortin-2 receptor accessory protein 2B (199 aa).

Residue Asn6 is glycosylated (N-linked (GlcNAc...) asparagine). Residues Ile39–Thr59 traverse the membrane as a helical segment.

Belongs to the MRAP family. As to quaternary structure, interacts with mc4r. In terms of tissue distribution, expressed in adult brain.

It localises to the cell membrane. Its subcellular location is the endoplasmic reticulum membrane. In terms of biological role, activator of melanocortin receptor 4 (mc4r), a receptor involved in energy homeostasis. Plays a role after larval development in the control of energy homeostasis and body weight regulation by increasing ligand-sensitivity of mc4r and mc4r-mediated generation of cAMP once the zebrafish begins feeding, increasing the capacity for regulated feeding and growth. The protein is Melanocortin-2 receptor accessory protein 2B (mrap2b) of Danio rerio (Zebrafish).